Consider the following 505-residue polypeptide: Cytochrome P450 9b1 (505 aa).

Residue Cys-449 coordinates heme.

It belongs to the cytochrome P450 family. Heme serves as cofactor.

It is found in the endoplasmic reticulum membrane. It localises to the microsome membrane. Functionally, may be involved in the metabolism of insect hormones and in the breakdown of synthetic insecticides. The polypeptide is Cytochrome P450 9b1 (Cyp9b1) (Drosophila melanogaster (Fruit fly)).